The chain runs to 336 residues: MENIQIKNFIYDIATGYIKSYSLKVILELEIPNKLKNECNGYNEHGLYVLLRTLSTMGIFKEDEEIDRLFSNTEISETLINDTDKYPWVNDSYFQVTLLPYFKHIEESLKTGKAMGTFNSGYNDGFDFIDKEKNLKKYFHNTLTEYTRTQIDSILEIVDFSNFKTIVDLGGSQGESIKKILDKYHLNNSIIEKGINYDLKEVIENNEKNYKDNRYFEIMGNFFTDETFPIGNCYLVKYIFHMFSDNQVLEILNKIYKSIKSSYQNEVCIYIFDHIIYKNKKSIPISIEYHTINILNGGKERTLNEWNNLIKLSNFKIDKVSSLPNILCSFIKLSLN.

Residues Gly-170, Asp-198, Asn-221, Phe-222, and Lys-237 each coordinate S-adenosyl-L-methionine. The Proton acceptor role is filled by His-241.

The protein belongs to the class I-like SAM-binding methyltransferase superfamily. Cation-independent O-methyltransferase family. COMT subfamily.

The catalysed reaction is (3,5-dichloro-2,4,6-trihydroxyphenyl)hexan-1-one + S-adenosyl-L-methionine = 1-(3,5-dichloro-2,6-dihydroxy-4-methoxyphenyl)hexan-1-one + S-adenosyl-L-homocysteine + H(+). The sequence is that of O-methyltransferase 2 (omt2) from Dictyostelium discoideum (Social amoeba).